Here is a 203-residue protein sequence, read N- to C-terminus: MSMEDYDFLFKIVLIGNAGVGKTCLVRRFTQGLFPPGQGATIGVDFMIKTVEINGEKVKLQIWDTAGQERFRSITQSYYRSANALILTYDITCEESFRCLPEWLREIEQYASNKVITVLVGNKIDLAERREVSQQRAEEFSEAQDMYYLETSAKESDNVEKLFLDLACRLISEARQNTLVNNVSSPLPGEGKSISYLTCCNFN.

GTP-binding residues include valine 20, glycine 21, lysine 22, threonine 23, cysteine 24, and threonine 41. Threonine 23 contributes to the Mg(2+) binding site. The switch-I stretch occupies residues proline 36 to valine 44. Residues threonine 41 and aspartate 64 each coordinate Mg(2+). Residues glycine 67, asparagine 122, lysine 123, aspartate 125, alanine 153, and lysine 154 each coordinate GTP. Residues glycine 67–asparagine 83 are switch-II. Residues cysteine 199 and cysteine 200 are each lipidated (S-geranylgeranyl cysteine). A Cysteine methyl ester modification is found at cysteine 200. A propeptide spans asparagine 201–asparagine 203 (removed in mature form).

It belongs to the small GTPase superfamily. Rab family. Mg(2+) serves as cofactor.

It localises to the membrane. The protein localises to the golgi apparatus. Its subcellular location is the trans-Golgi network membrane. It is found in the cis-Golgi network membrane. The protein resides in the golgi apparatus membrane. It localises to the cytoplasm. The protein localises to the cytoplasmic vesicle. Its subcellular location is the autophagosome membrane. It is found in the autolysosome membrane. It carries out the reaction GTP + H2O = GDP + phosphate + H(+). Regulated by guanine nucleotide exchange factors (GEFs) which promote the exchange of bound GDP for free GTP. Regulated by GTPase activating proteins (GAPs) which increase the GTP hydrolysis activity. Inhibited by GDP dissociation inhibitors (GDIs). The small GTPases Rab are key regulators of intracellular membrane trafficking, from the formation of transport vesicles to their fusion with membranes. Rabs cycle between an inactive GDP-bound form and an active GTP-bound form that is able to recruit to membranes different sets of downstream effectors directly responsible for vesicle formation, movement, tethering and fusion. RAB30 is required for maintaining the structural integrity of the Golgi apparatus, possibly by mediating interactions with cytoplasmic scaffolding proteins. Facilitates lipid homeostasis during fasting by regulating hepatic protein and lipid trafficking in a PPAR-alpha-dependent manner. Promotes autophagosome biogenesis during bacterial infection such as group A Streptococcus infection. This chain is Ras-related protein Rab-30 (RAB30), found in Bos taurus (Bovine).